The following is a 271-amino-acid chain: Glutamate racemase (271 aa).

Residues 12–13 (DS) and 44–45 (YG) contribute to the substrate site. The active-site Proton donor/acceptor is Cys-75. Substrate is bound at residue 76-77 (NT). Catalysis depends on Cys-185, which acts as the Proton donor/acceptor. 186-187 (TH) is a binding site for substrate.

This sequence belongs to the aspartate/glutamate racemases family.

The enzyme catalyses L-glutamate = D-glutamate. It functions in the pathway cell wall biogenesis; peptidoglycan biosynthesis. Provides the (R)-glutamate required for cell wall biosynthesis. The sequence is that of Glutamate racemase from Methylococcus capsulatus (strain ATCC 33009 / NCIMB 11132 / Bath).